The primary structure comprises 1025 residues: Leucyl-cystinyl aminopeptidase (1025 aa).

The residue at position 1 (Met1) is an N-acetylmethionine. At 1–109 the chain is on the cytoplasmic side; the sequence is METFTNDRLQ…DGTCSVPSAR (109 aa). The Dileucine internalization motif motif lies at 53-54; the sequence is LL. Tyr70 is subject to Phosphotyrosine. The Dileucine internalization motif motif lies at 76–77; that stretch reads LL. Phosphoserine; by PKC/PRKCZ; in vitro occurs at positions 80 and 91. The segment at 96-101 is tankyrase binding; the sequence is RQSPDG. The helical; Signal-anchor for type II membrane protein transmembrane segment at 110–131 threads the bilayer; the sequence is TLVICVFVIVVAVSVIMVIYLL. The Extracellular segment spans residues 132–1025; the sequence is PRCTFTKEGC…RNLKTLTLWL (894 aa). Residues Asn145, Asn184, Asn215, Asn256, and Asn266 are each glycosylated (N-linked (GlcNAc...) asparagine). Glu295 contacts substrate. 2 N-linked (GlcNAc...) asparagine glycosylation sites follow: Asn368 and Asn374. Substrate is bound at residue 428-432; that stretch reads GAMEN. Asn447 carries an N-linked (GlcNAc...) asparagine glycan. Residue His464 coordinates Zn(2+). The Proton acceptor role is filled by Glu465. Zn(2+) is bound by residues His468 and Glu487. N-linked (GlcNAc...) asparagine glycosylation is found at Asn525, Asn578, Asn664, Asn682, Asn695, Asn758, Asn834, Asn850, and Asn989.

It belongs to the peptidase M1 family. In terms of assembly, homodimer. Binds tankyrases 1 and 2. The cofactor is Zn(2+). N-glycosylated. Highly expressed in heart, brain, spleen, lung, kidney and white adipose tissue. Detected at lower levels in skeletal muscle and liver.

The protein resides in the cell membrane. The protein localises to the endomembrane system. It carries out the reaction Release of an N-terminal amino acid, Cys-|-Xaa-, in which the half-cystine residue is involved in a disulfide loop, notably in oxytocin or vasopressin. Hydrolysis rates on a range of aminoacyl arylamides exceed that for the cystinyl derivative, however.. In terms of biological role, release of an N-terminal amino acid, cleave before cysteine, leucine as well as other amino acids. Degrades peptide hormones such as oxytocin, vasopressin and angiotensin III, and plays a role in maintaining homeostasis during pregnancy. May be involved in the inactivation of neuronal peptides in the brain. Cleaves Met-enkephalin and dynorphin. Binds angiotensin IV and may be the angiotensin IV receptor in the brain. This Rattus norvegicus (Rat) protein is Leucyl-cystinyl aminopeptidase (Lnpep).